The chain runs to 91 residues: Large ribosomal subunit protein eL37 (91 aa).

Zn(2+) is bound by residues Cys19, Cys22, Cys34, and Cys37. A C4-type zinc finger spans residues 19–37 (CKRCGKSSFHIQKKRCASC).

Belongs to the eukaryotic ribosomal protein eL37 family. Requires Zn(2+) as cofactor.

Its function is as follows. Binds to the 23S rRNA. The chain is Large ribosomal subunit protein eL37 from Caenorhabditis elegans.